A 558-amino-acid polypeptide reads, in one-letter code: MSYTKYQRGYFMPPTPSLEWSKKEYIAKAPIWCSVDLRDGNQALITPMSLEEKITFFKLLLKVGFKEIEVGFPAASETEYRFLRTLIEEDLIPDDVSVQVLTQAREHIIKKTFESLEGCKNAIVHVYNSTSYAQREQVFRKSKDEIKHIACEGAICLKESAAATKGNFRFEYSPESFSGTEVDYALEVCNAVIDIFEPTLEKKLIINLPVTVEMSLPHIYASQVEYMSKHLKNRENVLISLHPHNDRGCAIADAELGLLAGADRIEGTLFGNGERTGNVDIITLAMNMHSHGVDPKLDFSNIPSICDVYEKVTKMQVYERQPYSGKLVFAAFSGSHQDAIAKGMAYHKEHNLSTWSVPYLPIDPKDVGRVYESDVIRINSQSGKGGIAYILHHHYGVNLPPLFREEFSYYVKNISDKAHKELSPDEICEIFQNDFVNLNNTLCVQDFHFTHIDSKPSQEFNVKLHILYAKENSKTQQEITGKGNGRLDSIANALREHLNLDFEIIDYSEHSLKKGSTSQAVSYVQIESKGKKCFGVGIDNDIITASIYGLVSALNRII.

A Pyruvate carboxyltransferase domain is found at 30-303; it reads PIWCSVDLRD…DPKLDFSNIP (274 aa). Mg(2+) contacts are provided by D39, H242, H244, and N278. The tract at residues 438–558 is regulatory domain; sequence LNNTLCVQDF…GLVSALNRII (121 aa).

Belongs to the alpha-IPM synthase/homocitrate synthase family. LeuA type 2 subfamily. In terms of assembly, homodimer. It depends on Mg(2+) as a cofactor.

The protein resides in the cytoplasm. The enzyme catalyses 3-methyl-2-oxobutanoate + acetyl-CoA + H2O = (2S)-2-isopropylmalate + CoA + H(+). Its pathway is amino-acid biosynthesis; L-leucine biosynthesis; L-leucine from 3-methyl-2-oxobutanoate: step 1/4. Functionally, catalyzes the condensation of the acetyl group of acetyl-CoA with 3-methyl-2-oxobutanoate (2-ketoisovalerate) to form 3-carboxy-3-hydroxy-4-methylpentanoate (2-isopropylmalate). The polypeptide is 2-isopropylmalate synthase (Helicobacter hepaticus (strain ATCC 51449 / 3B1)).